Here is an 88-residue protein sequence, read N- to C-terminus: Small ribosomal subunit protein uS15 (88 aa).

Over residues 1-12 (MLTNTDRQQVIA) the composition is skewed to polar residues. A disordered region spans residues 1 to 23 (MLTNTDRQQVIAQYQRAPGDTGS).

Belongs to the universal ribosomal protein uS15 family. As to quaternary structure, part of the 30S ribosomal subunit. Forms a bridge to the 50S subunit in the 70S ribosome, contacting the 23S rRNA.

Its function is as follows. One of the primary rRNA binding proteins, it binds directly to 16S rRNA where it helps nucleate assembly of the platform of the 30S subunit by binding and bridging several RNA helices of the 16S rRNA. In terms of biological role, forms an intersubunit bridge (bridge B4) with the 23S rRNA of the 50S subunit in the ribosome. The chain is Small ribosomal subunit protein uS15 from Psychrobacter sp. (strain PRwf-1).